The primary structure comprises 483 residues: NADPH:adrenodoxin oxidoreductase, mitochondrial (483 aa).

The N-terminal 14 residues, 1-14 (MSRYLARYMVSRYF), are a transit peptide targeting the mitochondrion. FAD is bound by residues Ala-32, Asp-53, Leu-61, and Leu-97. NADP(+) is bound by residues 169-172 (QGNV), 213-214 (RR), and Glu-225. Residues Trp-391 and 398–400 (GII) contribute to the FAD site. Gly-398 contributes to the NADP(+) binding site.

The protein belongs to the ferredoxin--NADP reductase type 1 family. Requires FAD as cofactor.

It localises to the mitochondrion. It carries out the reaction 2 reduced [adrenodoxin] + NADP(+) + H(+) = 2 oxidized [adrenodoxin] + NADPH. Functionally, associates in vitro with the adrenodoxin-like protein MFDX1 to form an efficient low potential electron transfer chain that is able to reduce cytochrome C. Functions as accessory mitochondrial protein involved with BIO2 in the plant biotin synthase reaction. The sequence is that of NADPH:adrenodoxin oxidoreductase, mitochondrial from Arabidopsis thaliana (Mouse-ear cress).